The chain runs to 294 residues: tRNA pseudouridine synthase B (294 aa).

The active-site Nucleophile is Asp39.

Belongs to the pseudouridine synthase TruB family. Type 1 subfamily.

The catalysed reaction is uridine(55) in tRNA = pseudouridine(55) in tRNA. In terms of biological role, responsible for synthesis of pseudouridine from uracil-55 in the psi GC loop of transfer RNAs. This Streptococcus pyogenes serotype M3 (strain ATCC BAA-595 / MGAS315) protein is tRNA pseudouridine synthase B.